A 185-amino-acid chain; its full sequence is Ribosome-recycling factor (185 aa).

Belongs to the RRF family.

Its subcellular location is the cytoplasm. Its function is as follows. Responsible for the release of ribosomes from messenger RNA at the termination of protein biosynthesis. May increase the efficiency of translation by recycling ribosomes from one round of translation to another. This Aliivibrio salmonicida (strain LFI1238) (Vibrio salmonicida (strain LFI1238)) protein is Ribosome-recycling factor.